A 1391-amino-acid polypeptide reads, in one-letter code: Periaxin (1391 aa).

S7 carries the phosphoserine modification. Positions 16–99 (LVEIIVETEA…YKVSFCLKRT (84 aa)) constitute a PDZ domain. The Nuclear export signal signature appears at 70-84 (VFFENFKYEDALRLL). Residues 118 to 196 (KGPRAKVAKL…RLQLPRLRVR (79 aa)) carry the Nuclear localization signal motif. At S243 the chain carries Phosphoserine. 12 tandem repeats follow at residues 432–436 (GPEVK), 440–444 (GPEVK), 448–452 (VPEVK), 456–460 (VPEAA), 464–468 (VQLPE), 469–473 (VQLPK), 474–478 (MSDMK), 482–486 (IPEMV), 487–491 (VPDVR), 495–499 (VQLPK), 500–504 (VPEMK), and 508–512 (MKLPK). Residues 432 to 719 (GPEVKAPTGP…MQVSQVPEVQ (288 aa)) form a 45 X 5 AA approximate tandem repeats of [LVMGIED]-[PQSKHARMI]-[EDKLVTR]-[LIVMAP]-[AQKHRPEVSD]; that may have a tripeptide spacer of [LVIDEA]-[PMSVI]-[KEATDQ] region. One copy of the 13; approximate repeat lies at 513 to 517 (WPEMA). 32 repeat units span residues 521-525 (VHLPD), 526-530 (VQLPK), 534-538 (MKLPK), 539-543 (VPEMA), 547-551 (VHLPD), 552-556 (VQLPK), 560-564 (MKLPE), 565-569 (MKLPK), 573-577 (MAVPD), 578-582 (VRLPE), 583-587 (VQLPK), 591-595 (VKLPK), 596-600 (MPEMA), 601-605 (VPDVH), 609-613 (LQLPK), 614-618 (MSEVK), 619-623 (LPKMP), 627-631 (VPDVR), 632-636 (LPEVQ), 637-641 (LPKVS), 645-649 (LPKMP), 650-654 (EMTMP), 655-659 (DIRLP), 663-667 (LPKVP), 671-675 (LPEMK), 676-680 (LPEIK), 684-688 (VPDMA), 689-693 (VPDVP), 697-701 (LQLPK), 702-706 (VSDIR), 707-711 (LPEMQ), and 715-719 (VPEVQ). S848, S979, S1028, S1279, S1283, S1285, S1293, S1331, and S1337 each carry phosphoserine. A disordered region spans residues 1267-1366 (LPRVGFSQSE…DREEGGFRVR (100 aa)). A compositionally biased stretch (low complexity) spans 1275–1285 (SESVSGEGSPS). The segment covering 1354 to 1363 (GSRDREEGGF) has biased composition (basic and acidic residues). Position 1369 is a phosphoserine (S1369).

This sequence belongs to the periaxin family. Homodimer (via PDZ domain). Interacts with SCN10A. Found in a complex with SCN10A. Interacts with DRP2. Identified in a dystroglycan complex that contains at least PRX, DRP2, UTRN, DMD and DAG1. Detected in a complex composed of at least EZR, AHNAK, PPL and PRX. Identified in a complex with EZR, AHNAK, BFSP1, BFSP2, ANK2, PLEC, VIM and spectrin. Detected in myelinating Schwann cells in intramuscular nerves in triangularis sterni. Detected in sciatic nerve. Detected in eye lens fiber cells. Isoform 1 is detected in myelinating Schwann cells in sciatic nerve. Isoform 2 is detected in myelinating Schwann cells in sciatic nerve (at protein level). Detected in sciatic nerve.

The protein localises to the cell membrane. It localises to the cell junction. The protein resides in the nucleus. Its subcellular location is the cytoplasm. Functionally, scaffolding protein that functions as part of a dystroglycan complex in Schwann cells, and as part of EZR and AHNAK-containing complexes in eye lens fiber cells. Required for the maintenance of the peripheral myelin sheath that is essential for normal transmission of nerve impulses and normal perception of sensory stimuli. Required for normal transport of MBP mRNA from the perinuclear to the paranodal regions. Required for normal remyelination after nerve injury. Required for normal elongation of Schwann cells and normal length of the internodes between the nodes of Ranvier. The demyelinated nodes of Ranvier permit saltatory transmission of nerve impulses; shorter internodes cause slower transmission of nerve impulses. Required for the formation of appositions between the abaxonal surface of the myelin sheath and the Schwann cell plasma membrane; the Schwann cell cytoplasm is restricted to regions between these appositions. Required for the formation of Cajal bands and of Schmidt-Lanterman incisures that correspond to short, cytoplasm-filled regions on myelinated nerves. Recruits DRP2 to the Schwann cell plasma membrane. Required for normal protein composition of the eye lens fiber cell plasma membrane and normal eye lens fiber cell morphology. The sequence is that of Periaxin (Prx) from Mus musculus (Mouse).